The primary structure comprises 261 residues: Ethanolamine ammonia-lyase small subunit (261 aa).

The adenosylcob(III)alamin site is built by Val-158, Glu-179, and Cys-208.

The protein belongs to the EutC family. The basic unit is a heterodimer which dimerizes to form tetramers. The heterotetramers trimerize; 6 large subunits form a core ring with 6 small subunits projecting outwards. Requires adenosylcob(III)alamin as cofactor.

The protein localises to the bacterial microcompartment. The catalysed reaction is ethanolamine = acetaldehyde + NH4(+). The protein operates within amine and polyamine degradation; ethanolamine degradation. Catalyzes the deamination of various vicinal amino-alcohols to oxo compounds. Allows this organism to utilize ethanolamine as the sole source of nitrogen and carbon in the presence of external vitamin B12. The sequence is that of Ethanolamine ammonia-lyase small subunit from Bradyrhizobium diazoefficiens (strain JCM 10833 / BCRC 13528 / IAM 13628 / NBRC 14792 / USDA 110).